The following is a 269-amino-acid chain: Phosphatidylglycerol--prolipoprotein diacylglyceryl transferase (269 aa).

4 consecutive transmembrane segments (helical) span residues 14–34 (IVQIGGFAVRWYSLLILAGII), 49–69 (VAPEVLSDLVVWLVVGAIPMA), 89–109 (VFAIWEGGIAIHGAILGGLLA), and 118–138 (GYSLLTMIDLAAPGLILGQAI). Arg140 provides a ligand contact to a 1,2-diacyl-sn-glycero-3-phospho-(1'-sn-glycerol). 3 helical membrane-spanning segments follow: residues 180–200 (TFLYESLWNLGVLALLLFVFF), 208–228 (GSIACLYALAYSVGRFWIEGL), and 240–260 (TAQLVSLAGIVLGAVGLWWLN).

It belongs to the Lgt family.

The protein localises to the cell inner membrane. It carries out the reaction L-cysteinyl-[prolipoprotein] + a 1,2-diacyl-sn-glycero-3-phospho-(1'-sn-glycerol) = an S-1,2-diacyl-sn-glyceryl-L-cysteinyl-[prolipoprotein] + sn-glycerol 1-phosphate + H(+). The protein operates within protein modification; lipoprotein biosynthesis (diacylglyceryl transfer). Its function is as follows. Catalyzes the transfer of the diacylglyceryl group from phosphatidylglycerol to the sulfhydryl group of the N-terminal cysteine of a prolipoprotein, the first step in the formation of mature lipoproteins. The polypeptide is Phosphatidylglycerol--prolipoprotein diacylglyceryl transferase (Gloeobacter violaceus (strain ATCC 29082 / PCC 7421)).